Here is a 162-residue protein sequence, read N- to C-terminus: Protein FAM167B (162 aa).

It belongs to the FAM167 (SEC) family.

The chain is Protein FAM167B (Fam167b) from Mus musculus (Mouse).